The primary structure comprises 548 residues: pH-responsive protein 1 (548 aa).

An N-terminal signal peptide occupies residues Met1–Ala20. The N-linked (GlcNAc...) asparagine glycan is linked to Asn41. Cysteines 82 and 111 form a disulfide. N-linked (GlcNAc...) asparagine glycosylation is found at Asn173 and Asn261. 5 disulfide bridges follow: Cys224-Cys358, Cys242-Cys273, Cys381-Cys432, Cys390-Cys456, and Cys409-Cys414. The tract at residues Gly483 to Gly518 is disordered. Residue Ser517 is the site of GPI-anchor amidated serine attachment. The propeptide at Gly518–Phe548 is removed in mature form.

The protein belongs to the glycosyl hydrolase 72 family.

It localises to the cell membrane. Required for apical cell growth and plays an essential role in morphogenesis. May be integral to the pathogenic ability of the organism. This Candida albicans (strain SC5314 / ATCC MYA-2876) (Yeast) protein is pH-responsive protein 1 (PHR1).